A 304-amino-acid chain; its full sequence is Cell surface-binding protein OPG105 (304 aa).

In terms of domain architecture, Alpha-carbonic anhydrase spans 1-235; that stretch reads MPQQLSPINI…NDDTQVYYSG (235 aa). Residues 1–275 lie on the Virion surface side of the membrane; it reads MPQQLSPINI…YQKYIEGNKT (275 aa). A helical transmembrane segment spans residues 276–294; the sequence is FAIIAIVFVFILTAILFLM. At 295 to 304 the chain is on the intravirion side; the sequence is SRRYSREKQN.

This sequence belongs to the alpha-carbonic anhydrase family. In terms of assembly, homodimer; disulfide-linked. Apparently non-glycosylated.

Its subcellular location is the virion membrane. In terms of biological role, binds to chondroitin sulfate on the cell surface to provide virion attachment to target cell. This chain is Cell surface-binding protein OPG105 (OPG105), found in Vaccinia virus (strain Copenhagen) (VACV).